The chain runs to 161 residues: Protein-export protein SecB (161 aa).

This sequence belongs to the SecB family. Homotetramer, a dimer of dimers. One homotetramer interacts with 1 SecA dimer.

Its subcellular location is the cytoplasm. One of the proteins required for the normal export of preproteins out of the cell cytoplasm. It is a molecular chaperone that binds to a subset of precursor proteins, maintaining them in a translocation-competent state. It also specifically binds to its receptor SecA. The polypeptide is Protein-export protein SecB (Rhodopseudomonas palustris (strain BisA53)).